A 253-amino-acid polypeptide reads, in one-letter code: REF/SRPP-like protein OsI_017815 (253 aa).

The interval 1-26 (MADSGSDAPISNRPEEEVTVEKTPEM) is disordered. A compositionally biased stretch (basic and acidic residues) spans 13–26 (RPEEEVTVEKTPEM).

The protein belongs to the REF/SRPP family.

The chain is REF/SRPP-like protein OsI_017815 from Oryza sativa subsp. indica (Rice).